The primary structure comprises 152 residues: Superoxide dismutase [Cu-Zn] 4AP (152 aa).

Histidine 45, histidine 47, and histidine 62 together coordinate Cu cation. A disulfide bond links cysteine 56 and cysteine 145. Zn(2+) contacts are provided by histidine 62, histidine 70, histidine 79, and aspartate 82. Residue histidine 119 coordinates Cu cation.

Belongs to the Cu-Zn superoxide dismutase family. In terms of assembly, homodimer. Requires Cu cation as cofactor. Zn(2+) is required as a cofactor.

It localises to the cytoplasm. The enzyme catalyses 2 superoxide + 2 H(+) = H2O2 + O2. Functionally, destroys radicals which are normally produced within the cells and which are toxic to biological systems. The sequence is that of Superoxide dismutase [Cu-Zn] 4AP (SODCC.2) from Zea mays (Maize).